Reading from the N-terminus, the 148-residue chain is Aspartate carbamoyltransferase regulatory chain (148 aa).

Zn(2+)-binding residues include Cys106, Cys111, Cys134, and Cys137.

It belongs to the PyrI family. Contains catalytic and regulatory chains. Zn(2+) serves as cofactor.

Functionally, involved in allosteric regulation of aspartate carbamoyltransferase. This is Aspartate carbamoyltransferase regulatory chain from Methanococcus maripaludis (strain C7 / ATCC BAA-1331).